Here is a 420-residue protein sequence, read N- to C-terminus: Trophoblast glycoprotein (420 aa).

An N-terminal signal peptide occupies residues Met-1 to Ser-34. Over Thr-35–Ser-355 the chain is Extracellular. The LRRNT domain maps to Ser-53–Leu-91. 2 disulfides stabilise this stretch: Cys-62–Cys-68 and Cys-66–Cys-77. The N-linked (GlcNAc...) asparagine glycan is linked to Asn-81. LRR repeat units follow at residues Tyr-92 to Arg-113, Pro-116 to Glu-139, Leu-141 to Ser-163, Pro-172 to Val-204, Leu-209 to Gln-232, Leu-233 to Arg-255, and Asn-256 to Asn-275. Asn-124 is a glycosylation site (N-linked (GlcNAc...) asparagine). Asn-275 carries an N-linked (GlcNAc...) asparagine glycan. Positions Gly-283–Pro-346 constitute an LRRCT domain. Intrachain disulfides connect Cys-298/Cys-323 and Cys-300/Cys-344. A helical transmembrane segment spans residues Tyr-356–Leu-376. The Cytoplasmic portion of the chain corresponds to Asn-377–Val-420. Position 418 is a phosphoserine (Ser-418).

Post-translationally, highly glycosylated.

Its subcellular location is the cell membrane. Functionally, may function as an inhibitor of Wnt/beta-catenin signaling by indirectly interacting with LRP6 and blocking Wnt3a-dependent LRP6 internalization. The polypeptide is Trophoblast glycoprotein (TPBG) (Macaca fascicularis (Crab-eating macaque)).